The primary structure comprises 224 residues: Cytidylate kinase (224 aa).

ATP is bound at residue 11-19 (GPAGAGKST).

It belongs to the cytidylate kinase family. Type 1 subfamily.

It localises to the cytoplasm. The enzyme catalyses CMP + ATP = CDP + ADP. The catalysed reaction is dCMP + ATP = dCDP + ADP. The chain is Cytidylate kinase from Exiguobacterium sp. (strain ATCC BAA-1283 / AT1b).